A 330-amino-acid chain; its full sequence is Ferredoxin--NADP reductase (330 aa).

E34, Q42, Y47, V87, F121, D285, and S325 together coordinate FAD.

Belongs to the ferredoxin--NADP reductase type 2 family. Homodimer. The cofactor is FAD.

It catalyses the reaction 2 reduced [2Fe-2S]-[ferredoxin] + NADP(+) + H(+) = 2 oxidized [2Fe-2S]-[ferredoxin] + NADPH. In Limosilactobacillus fermentum (strain NBRC 3956 / LMG 18251) (Lactobacillus fermentum), this protein is Ferredoxin--NADP reductase.